The following is a 211-amino-acid chain: SsrA-binding protein (211 aa).

The tract at residues 168–211 (KHRLRRPRAQRNTQRSVTPRRTRENKNVRGSKARSARRNVRREN) is disordered. Residues 177 to 186 (QRNTQRSVTP) are compositionally biased toward polar residues. Residues 196-211 (RGSKARSARRNVRREN) show a composition bias toward basic residues.

This sequence belongs to the SmpB family.

The protein localises to the cytoplasm. In terms of biological role, required for rescue of stalled ribosomes mediated by trans-translation. Binds to transfer-messenger RNA (tmRNA), required for stable association of tmRNA with ribosomes. tmRNA and SmpB together mimic tRNA shape, replacing the anticodon stem-loop with SmpB. tmRNA is encoded by the ssrA gene; the 2 termini fold to resemble tRNA(Ala) and it encodes a 'tag peptide', a short internal open reading frame. During trans-translation Ala-aminoacylated tmRNA acts like a tRNA, entering the A-site of stalled ribosomes, displacing the stalled mRNA. The ribosome then switches to translate the ORF on the tmRNA; the nascent peptide is terminated with the 'tag peptide' encoded by the tmRNA and targeted for degradation. The ribosome is freed to recommence translation, which seems to be the essential function of trans-translation. This is SsrA-binding protein from Tropheryma whipplei (strain Twist) (Whipple's bacillus).